Here is a 957-residue protein sequence, read N- to C-terminus: Glycine dehydrogenase (decarboxylating) (957 aa).

The residue at position 708 (K708) is an N6-(pyridoxal phosphate)lysine.

This sequence belongs to the GcvP family. In terms of assembly, the glycine cleavage system is composed of four proteins: P, T, L and H. The cofactor is pyridoxal 5'-phosphate.

It carries out the reaction N(6)-[(R)-lipoyl]-L-lysyl-[glycine-cleavage complex H protein] + glycine + H(+) = N(6)-[(R)-S(8)-aminomethyldihydrolipoyl]-L-lysyl-[glycine-cleavage complex H protein] + CO2. Functionally, the glycine cleavage system catalyzes the degradation of glycine. The P protein binds the alpha-amino group of glycine through its pyridoxal phosphate cofactor; CO(2) is released and the remaining methylamine moiety is then transferred to the lipoamide cofactor of the H protein. The protein is Glycine dehydrogenase (decarboxylating) of Escherichia coli (strain UTI89 / UPEC).